The primary structure comprises 424 residues: Gamma-glutamyl phosphate reductase (424 aa).

It belongs to the gamma-glutamyl phosphate reductase family.

It is found in the cytoplasm. The catalysed reaction is L-glutamate 5-semialdehyde + phosphate + NADP(+) = L-glutamyl 5-phosphate + NADPH + H(+). It functions in the pathway amino-acid biosynthesis; L-proline biosynthesis; L-glutamate 5-semialdehyde from L-glutamate: step 2/2. Functionally, catalyzes the NADPH-dependent reduction of L-glutamate 5-phosphate into L-glutamate 5-semialdehyde and phosphate. The product spontaneously undergoes cyclization to form 1-pyrroline-5-carboxylate. The protein is Gamma-glutamyl phosphate reductase of Dehalococcoides mccartyi (strain CBDB1).